We begin with the raw amino-acid sequence, 99 residues long: Acylphosphatase (99 aa).

The region spanning 14–99 is the Acylphosphatase-like domain; it reads AVDVTVTGRV…DQGLRSFGVR (86 aa). Catalysis depends on residues Arg29 and Asn47.

Belongs to the acylphosphatase family.

It carries out the reaction an acyl phosphate + H2O = a carboxylate + phosphate + H(+). This is Acylphosphatase (acyP) from Nocardioides sp. (strain ATCC BAA-499 / JS614).